A 149-amino-acid chain; its full sequence is Phosphoribosyl-AMP cyclohydrolase (149 aa).

Aspartate 92 contributes to the Mg(2+) binding site. Cysteine 93 is a Zn(2+) binding site. Aspartate 94 and aspartate 96 together coordinate Mg(2+). Cysteine 111 and cysteine 118 together coordinate Zn(2+).

Belongs to the PRA-CH family. As to quaternary structure, homodimer. The cofactor is Mg(2+). Requires Zn(2+) as cofactor.

It is found in the cytoplasm. The enzyme catalyses 1-(5-phospho-beta-D-ribosyl)-5'-AMP + H2O = 1-(5-phospho-beta-D-ribosyl)-5-[(5-phospho-beta-D-ribosylamino)methylideneamino]imidazole-4-carboxamide. It functions in the pathway amino-acid biosynthesis; L-histidine biosynthesis; L-histidine from 5-phospho-alpha-D-ribose 1-diphosphate: step 3/9. Functionally, catalyzes the hydrolysis of the adenine ring of phosphoribosyl-AMP. This is Phosphoribosyl-AMP cyclohydrolase from Rhizobium rhizogenes (strain K84 / ATCC BAA-868) (Agrobacterium radiobacter).